The following is an 87-amino-acid chain: Small ribosomal subunit protein bS20 (87 aa).

A disordered region spans residues 1-22 (MANIKSQIKRIGTNKKAQERNK).

Belongs to the bacterial ribosomal protein bS20 family.

In terms of biological role, binds directly to 16S ribosomal RNA. This Clavibacter michiganensis subsp. michiganensis (strain NCPPB 382) protein is Small ribosomal subunit protein bS20.